The following is a 403-amino-acid chain: S-adenosylmethionine synthase (403 aa).

H22 is an ATP binding site. D24 contacts Mg(2+). Residue E50 coordinates K(+). L-methionine-binding residues include E63 and Q107. The interval 107–117 is flexible loop; the sequence is QSPDIAMGVDK. ATP-binding positions include 182-184, 248-249, D257, 263-264, A280, and K284; these read DAK, RF, and RK. Residue D257 participates in L-methionine binding. Position 288 (K288) interacts with L-methionine.

The protein belongs to the AdoMet synthase family. Homotetramer; dimer of dimers. Mg(2+) serves as cofactor. It depends on K(+) as a cofactor.

Its subcellular location is the cytoplasm. It carries out the reaction L-methionine + ATP + H2O = S-adenosyl-L-methionine + phosphate + diphosphate. The protein operates within amino-acid biosynthesis; S-adenosyl-L-methionine biosynthesis; S-adenosyl-L-methionine from L-methionine: step 1/1. Catalyzes the formation of S-adenosylmethionine (AdoMet) from methionine and ATP. The overall synthetic reaction is composed of two sequential steps, AdoMet formation and the subsequent tripolyphosphate hydrolysis which occurs prior to release of AdoMet from the enzyme. This is S-adenosylmethionine synthase from Chloroflexus aurantiacus (strain ATCC 29366 / DSM 635 / J-10-fl).